A 97-amino-acid chain; its full sequence is Co-chaperonin GroES (97 aa).

This sequence belongs to the GroES chaperonin family. As to quaternary structure, heptamer of 7 subunits arranged in a ring. Interacts with the chaperonin GroEL.

It is found in the cytoplasm. Its function is as follows. Together with the chaperonin GroEL, plays an essential role in assisting protein folding. The GroEL-GroES system forms a nano-cage that allows encapsulation of the non-native substrate proteins and provides a physical environment optimized to promote and accelerate protein folding. GroES binds to the apical surface of the GroEL ring, thereby capping the opening of the GroEL channel. In Burkholderia vietnamiensis, this protein is Co-chaperonin GroES.